We begin with the raw amino-acid sequence, 601 residues long: MVKKMKNIRNFSIIAHIDHGKSTLSDRLIQKCGGLSEREMSDQVLDSMDLEKERGITIKAQSVMIDYKDKNGNVFHLNFIDTPGHVNFSYEVSRSLAACEGALLVVDSSQGVEAQTLANCATALEMKLSIVPVLNKIDLPNSNPEKVAREIKEIIGISALDAIRCSAKTGQGIEELIEQIIKKIPAPDGDEKKPLQALIIDSWFDNYLGVVSLIRIKNGIISKKDKIKVMSTGKTYFVDHLGIFTPKKINKNYLKCGEVGWIVCGIKNISAAPVGDTLTNAKNPAMNMLTGFKKIKPQIYAGLFPVTSDQYEIFRDALGKLSLNDSSLFYEPINSTALGFGFRCGFLGLLHMEIVQARLEREYSLNLISTAPNVIYQIEFNNGEKIYLDTPSNFPVDNKIRKIKEPIVECNILLPPKFLGPVMKLCIKKRGTEINMIYHEQQVSLKYHIPMNEVVLNFFDELKSVSSGYASLEYDFKYFKTVKMVRIDILINSERVDALTVISYYKNAQNRAREIVNKMKELIPRHQFDINIQATINNSIVARSTIKQLRKNVLAKCYGGDISRKKKLLKKQKDGKKRMKKIGNVNMPKTAFLDILNIHKD.

A tr-type G domain is found at Lys-6–Asp-188. Residues Asp-18–Thr-23 and Asn-135–Asp-138 contribute to the GTP site.

Belongs to the TRAFAC class translation factor GTPase superfamily. Classic translation factor GTPase family. LepA subfamily.

It localises to the cell membrane. The catalysed reaction is GTP + H2O = GDP + phosphate + H(+). Functionally, required for accurate and efficient protein synthesis under certain stress conditions. May act as a fidelity factor of the translation reaction, by catalyzing a one-codon backward translocation of tRNAs on improperly translocated ribosomes. Back-translocation proceeds from a post-translocation (POST) complex to a pre-translocation (PRE) complex, thus giving elongation factor G a second chance to translocate the tRNAs correctly. Binds to ribosomes in a GTP-dependent manner. This chain is Elongation factor 4, found in Buchnera aphidicola subsp. Schizaphis graminum (strain Sg).